Reading from the N-terminus, the 192-residue chain is MNTIWIAVGALTLLGLVFGAILGYASRRFAVEDDPVVEKIDAILPQSQCGQCGYPGCRPYAEAVGLQGEKINRCAPGGEAVMLKMAELLNVEPQPCDGEEQQAAPVRMLAVIDENNCIGCTKCIQACPVDAIVGATRAMHTVMSDLCTGCNLCVDPCPTHCIELRPVNETPDSWKWDLNTIPVRIIPVEQHA.

A hydrophobic region spans residues 1 to 26 (MNTIWIAVGALTLLGLVFGAILGYAS). Positions 32 to 91 (EDDPVVEKIDAILPQSQCGQCGYPGCRPYAEAVGLQGEKINRCAPGGEAVMLKMAELLNV) constitute a 4Fe-4S domain. [4Fe-4S] cluster contacts are provided by Cys-49, Cys-52, Cys-57, Cys-74, Cys-117, Cys-120, Cys-123, Cys-127, Cys-147, Cys-150, Cys-153, and Cys-157. 4Fe-4S ferredoxin-type domains lie at 108–137 (MLAV…GATR) and 138–167 (AMHT…LRPV).

This sequence belongs to the 4Fe4S bacterial-type ferredoxin family. RnfB subfamily. As to quaternary structure, the complex is composed of six subunits: RsxA, RsxB, RsxC, RsxD, RsxE and RsxG. [4Fe-4S] cluster is required as a cofactor.

It localises to the cell inner membrane. Part of a membrane-bound complex that couples electron transfer with translocation of ions across the membrane. Required to maintain the reduced state of SoxR. This Salmonella agona (strain SL483) protein is Ion-translocating oxidoreductase complex subunit B.